Here is a 132-residue protein sequence, read N- to C-terminus: Small ribosomal subunit protein uS11 (132 aa).

It belongs to the universal ribosomal protein uS11 family. In terms of assembly, part of the 30S ribosomal subunit. Interacts with proteins S7 and S18. Binds to IF-3.

Functionally, located on the platform of the 30S subunit, it bridges several disparate RNA helices of the 16S rRNA. Forms part of the Shine-Dalgarno cleft in the 70S ribosome. The sequence is that of Small ribosomal subunit protein uS11 from Leifsonia xyli subsp. xyli (strain CTCB07).